A 480-amino-acid chain; its full sequence is Protein nucleotidyltransferase YdiU (480 aa).

ATP contacts are provided by glycine 86, glycine 88, arginine 89, lysine 109, aspartate 121, glycine 122, arginine 172, and arginine 179. Residue aspartate 248 is the Proton acceptor of the active site. 2 residues coordinate Mg(2+): asparagine 249 and aspartate 258. Aspartate 258 serves as a coordination point for ATP.

Belongs to the SELO family. Mg(2+) serves as cofactor. The cofactor is Mn(2+).

It carries out the reaction L-seryl-[protein] + ATP = 3-O-(5'-adenylyl)-L-seryl-[protein] + diphosphate. The catalysed reaction is L-threonyl-[protein] + ATP = 3-O-(5'-adenylyl)-L-threonyl-[protein] + diphosphate. The enzyme catalyses L-tyrosyl-[protein] + ATP = O-(5'-adenylyl)-L-tyrosyl-[protein] + diphosphate. It catalyses the reaction L-histidyl-[protein] + UTP = N(tele)-(5'-uridylyl)-L-histidyl-[protein] + diphosphate. It carries out the reaction L-seryl-[protein] + UTP = O-(5'-uridylyl)-L-seryl-[protein] + diphosphate. The catalysed reaction is L-tyrosyl-[protein] + UTP = O-(5'-uridylyl)-L-tyrosyl-[protein] + diphosphate. Nucleotidyltransferase involved in the post-translational modification of proteins. It can catalyze the addition of adenosine monophosphate (AMP) or uridine monophosphate (UMP) to a protein, resulting in modifications known as AMPylation and UMPylation. The chain is Protein nucleotidyltransferase YdiU from Salmonella heidelberg (strain SL476).